We begin with the raw amino-acid sequence, 247 residues long: Large ribosomal subunit protein uL3 (247 aa).

2 disordered regions span residues arginine 124 to methionine 145 and valine 218 to glutamate 247. Residues valine 222–asparagine 241 are compositionally biased toward basic and acidic residues.

Belongs to the universal ribosomal protein uL3 family. Part of the 50S ribosomal subunit. Forms a cluster with proteins L14 and L19.

In terms of biological role, one of the primary rRNA binding proteins, it binds directly near the 3'-end of the 23S rRNA, where it nucleates assembly of the 50S subunit. The sequence is that of Large ribosomal subunit protein uL3 from Oenococcus oeni (strain ATCC BAA-331 / PSU-1).